The following is a 130-amino-acid chain: Small ribosomal subunit protein uS8 (130 aa).

The protein belongs to the universal ribosomal protein uS8 family. Part of the 30S ribosomal subunit.

Its function is as follows. One of the primary rRNA binding proteins, it binds directly to 16S rRNA central domain where it helps coordinate assembly of the platform of the 30S subunit. This chain is Small ribosomal subunit protein uS8, found in Methanothermococcus thermolithotrophicus (Methanococcus thermolithotrophicus).